The following is a 55-amino-acid chain: Large ribosomal subunit protein bL33 (55 aa).

It belongs to the bacterial ribosomal protein bL33 family.

This Caulobacter vibrioides (strain ATCC 19089 / CIP 103742 / CB 15) (Caulobacter crescentus) protein is Large ribosomal subunit protein bL33.